The primary structure comprises 856 residues: Envelope glycoprotein gp160 (856 aa).

The signal sequence occupies residues 1–32 (MRVKEKYQHLRRWGWRWGTMLLGMLMICSATE). Residues 33 to 684 (KLWVTVYYGV…ITNWLWYIKI (652 aa)) lie on the Extracellular side of the membrane. A disulfide bridge links Cys-54 with Cys-74. 18 N-linked (GlcNAc...) asparagine; by host glycosylation sites follow: Asn-88, Asn-136, Asn-141, Asn-156, Asn-160, Asn-186, Asn-197, Asn-230, Asn-234, Asn-241, Asn-262, Asn-276, Asn-289, Asn-295, Asn-301, Asn-332, Asn-339, and Asn-356. 5 disulfide bridges follow: Cys-119/Cys-205, Cys-126/Cys-196, Cys-131/Cys-157, Cys-218/Cys-247, and Cys-228/Cys-239. A V1 region spans residues 131–156 (CTDLKNDTNTNSSSGGMIMEKGEIKN). The interval 157-196 (CSFNISTSIRGKVQKEYAFFYKHDIIPIDNDTTSYTLTSC) is V2. Residues 296 to 330 (CTRPNNNTRKRIRIQRGPGRTFVTIGKIGNMRQAH) form a V3 region. An intrachain disulfide couples Cys-296 to Cys-331. The CD4-binding loop stretch occupies residues 364–374 (SSGGDLEIVTH). Disulfide bonds link Cys-378-Cys-445 and Cys-385-Cys-418. The interval 385–418 (CNSTQLFNSTWFNSTWSTEGSNNTEGSDTITLPC) is V4. Residues Asn-386, Asn-392, Asn-397, Asn-406, Asn-448, and Asn-463 are each glycosylated (N-linked (GlcNAc...) asparagine; by host). V5 stretches follow at residues 461 to 471 (NNNGSEIFRPG) and 463 to 471 (NGSEIFRPG). The fusion peptide stretch occupies residues 512–532 (AVGIGALFLGFLGAAGSTMGA). The interval 574–592 (KQLQARILAVERYLKDQQL) is immunosuppression. The cysteines at positions 598 and 604 are disulfide-linked. N-linked (GlcNAc...) asparagine; by host glycosylation is found at Asn-611, Asn-616, Asn-624, Asn-637, and Asn-674. A coiled-coil region spans residues 633–667 (REINNYTSLIHSLIEESQNQQEKNEQELLELDKWA). Residues 662-683 (ELDKWASLWNWFNITNWLWYIK) are MPER; binding to GalCer. The chain crosses the membrane as a helical span at residues 685–705 (FIMIVGGLVGLRIVFAVLSIV). Residues 706–856 (NRVRQGHSPL…IRQGLERILL (151 aa)) are Cytoplasmic-facing. Residues 715–742 (LSFQTHLPTPGGPDRPEGIEEEGGERDR) form a disordered region. S-palmitoyl cysteine; by host attachment occurs at residues Cys-764 and Cys-837. The short motif at 855–856 (LL) is the Di-leucine internalization motif element.

It belongs to the HIV-1 env protein family. As to quaternary structure, the mature envelope protein (Env) consists of a homotrimer of non-covalently associated gp120-gp41 heterodimers. The resulting complex protrudes from the virus surface as a spike. There seems to be as few as 10 spikes on the average virion. Interacts with host CD4, CCR5 and CXCR4. Gp120 also interacts with the C-type lectins CD209/DC-SIGN and CLEC4M/DC-SIGNR (collectively referred to as DC-SIGN(R)). Gp120 and gp41 interact with GalCer. Gp120 interacts with host ITGA4/ITGB7 complex; on CD4+ T-cells, this interaction results in rapid activation of integrin ITGAL/LFA-1, which facilitates efficient cell-to-cell spreading of HIV-1. Gp120 interacts with cell-associated heparan sulfate; this interaction increases virus infectivity on permissive cells and may be involved in infection of CD4- cells. In terms of assembly, the mature envelope protein (Env) consists of a homotrimer of non-covalently associated gp120-gp41 heterodimers. The resulting complex protrudes from the virus surface as a spike. There seems to be as few as 10 spikes on the average virion. Post-translationally, highly glycosylated by host. The high number of glycan on the protein is reffered to as 'glycan shield' because it contributes to hide protein sequence from adaptive immune system. In terms of processing, palmitoylation of the transmembrane protein and of Env polyprotein (prior to its proteolytic cleavage) is essential for their association with host cell membrane lipid rafts. Palmitoylation is therefore required for envelope trafficking to classical lipid rafts, but not for viral replication. Specific enzymatic cleavages in vivo yield mature proteins. Envelope glycoproteins are synthesized as an inactive precursor that is heavily N-glycosylated and processed likely by host cell furin in the Golgi to yield the mature SU and TM proteins. The cleavage site between SU and TM requires the minimal sequence [KR]-X-[KR]-R. About 2 of the 9 disulfide bonds of gp41 are reduced by P4HB/PDI, following binding to CD4 receptor.

The protein resides in the virion membrane. Its subcellular location is the host cell membrane. It localises to the host endosome membrane. Functionally, oligomerizes in the host endoplasmic reticulum into predominantly trimers. In a second time, gp160 transits in the host Golgi, where glycosylation is completed. The precursor is then proteolytically cleaved in the trans-Golgi and thereby activated by cellular furin or furin-like proteases to produce gp120 and gp41. Attaches the virus to the host lymphoid cell by binding to the primary receptor CD4. This interaction induces a structural rearrangement creating a high affinity binding site for a chemokine coreceptor like CXCR4 and/or CCR5. Acts as a ligand for CD209/DC-SIGN and CLEC4M/DC-SIGNR, which are respectively found on dendritic cells (DCs), and on endothelial cells of liver sinusoids and lymph node sinuses. These interactions allow capture of viral particles at mucosal surfaces by these cells and subsequent transmission to permissive cells. HIV subverts the migration properties of dendritic cells to gain access to CD4+ T-cells in lymph nodes. Virus transmission to permissive T-cells occurs either in trans (without DCs infection, through viral capture and transmission), or in cis (following DCs productive infection, through the usual CD4-gp120 interaction), thereby inducing a robust infection. In trans infection, bound virions remain infectious over days and it is proposed that they are not degraded, but protected in non-lysosomal acidic organelles within the DCs close to the cell membrane thus contributing to the viral infectious potential during DCs' migration from the periphery to the lymphoid tissues. On arrival at lymphoid tissues, intact virions recycle back to DCs' cell surface allowing virus transmission to CD4+ T-cells. In terms of biological role, acts as a class I viral fusion protein. Under the current model, the protein has at least 3 conformational states: pre-fusion native state, pre-hairpin intermediate state, and post-fusion hairpin state. During fusion of viral and target intracellular membranes, the coiled coil regions (heptad repeats) assume a trimer-of-hairpins structure, positioning the fusion peptide in close proximity to the C-terminal region of the ectodomain. The formation of this structure appears to drive apposition and subsequent fusion of viral and target cell membranes. Complete fusion occurs in host cell endosomes and is dynamin-dependent, however some lipid transfer might occur at the plasma membrane. The virus undergoes clathrin-dependent internalization long before endosomal fusion, thus minimizing the surface exposure of conserved viral epitopes during fusion and reducing the efficacy of inhibitors targeting these epitopes. Membranes fusion leads to delivery of the nucleocapsid into the cytoplasm. The polypeptide is Envelope glycoprotein gp160 (Homo sapiens (Human)).